The chain runs to 441 residues: Dihydroorotase (441 aa).

The Zn(2+) site is built by H77 and H79. Substrate contacts are provided by residues 79–81 and N111; that span reads HFR. D167, H194, and H248 together coordinate Zn(2+). Residue N294 coordinates substrate. D321 provides a ligand contact to Zn(2+). D321 is an active-site residue. Residues H325 and 339-340 contribute to the substrate site; that span reads FG.

This sequence belongs to the metallo-dependent hydrolases superfamily. DHOase family. Class I DHOase subfamily. Zn(2+) is required as a cofactor.

It catalyses the reaction (S)-dihydroorotate + H2O = N-carbamoyl-L-aspartate + H(+). Its pathway is pyrimidine metabolism; UMP biosynthesis via de novo pathway; (S)-dihydroorotate from bicarbonate: step 3/3. Catalyzes the reversible cyclization of carbamoyl aspartate to dihydroorotate. This chain is Dihydroorotase, found in Wolbachia sp. subsp. Drosophila simulans (strain wRi).